The chain runs to 158 residues: Egg cell-secreted protein 1.1 (158 aa).

The N-terminal stretch at methionine 1–alanine 27 is a signal peptide. Residue asparagine 122 is glycosylated (N-linked (GlcNAc...) asparagine).

This sequence belongs to the plant egg cell-secreted peptide family. As to expression, restricted to female reproductive tissues, specifically accumulating in storage vesicles of the unfertilized egg cell.

The protein localises to the cytoplasmic vesicle. It localises to the secreted. Its function is as follows. Involved in the regulation of gamete interactions during the double fertilization and to prevent multiple-pollen tube attraction; mediates the redistribution of the gamete fusogen HAP2/GCS1 to the cell surface after secretion upon sperm arrival. The polypeptide is Egg cell-secreted protein 1.1 (EC1.1) (Arabidopsis thaliana (Mouse-ear cress)).